The following is a 59-amino-acid chain: MFAGLPSLSHEQQQKAVERIQELMSQGMSSGQAIAQVADELRATHTGERIVARFEDEDE.

The protein belongs to the UPF0181 family.

The chain is UPF0181 protein CKO_01169 from Citrobacter koseri (strain ATCC BAA-895 / CDC 4225-83 / SGSC4696).